Here is a 147-residue protein sequence, read N- to C-terminus: Holo-[acyl-carrier-protein] synthase (147 aa).

The Mg(2+) site is built by D7 and E60.

It belongs to the P-Pant transferase superfamily. AcpS family. It depends on Mg(2+) as a cofactor.

It localises to the cytoplasm. The catalysed reaction is apo-[ACP] + CoA = holo-[ACP] + adenosine 3',5'-bisphosphate + H(+). Its function is as follows. Transfers the 4'-phosphopantetheine moiety from coenzyme A to a Ser of acyl-carrier-protein. The chain is Holo-[acyl-carrier-protein] synthase from Bifidobacterium animalis subsp. lactis (strain AD011).